A 313-amino-acid polypeptide reads, in one-letter code: Olfactory receptor 1G1 (313 aa).

The Extracellular portion of the chain corresponds to 1 to 25 (MEGKNLTSISEFFLLGFSEQLEEQK). The N-linked (GlcNAc...) asparagine glycan is linked to asparagine 5. The helical transmembrane segment at 26–49 (ALFGSFLFMYLVMVAGNLLIILVI) threads the bilayer. Topologically, residues 50-57 (ITDTQLHT) are cytoplasmic. A helical membrane pass occupies residues 58–79 (PMYFFLANLSLADACFVSTTVP). At 80-100 (KMLANIQIQSQAISYSGCLLQ) the chain is on the extracellular side. A disulfide bridge links cysteine 97 with cysteine 189. The helical transmembrane segment at 101–120 (LYFFMLFVMLEAFLLAVMAY) threads the bilayer. Topologically, residues 121-140 (DHYVAICHPLHYILIMSPGL) are cytoplasmic. A helical membrane pass occupies residues 141-158 (CVFLVSASWIMNALYSLL). At 159 to 196 (HTLLMNSLSFCANHEIPHFFCDIDPLLSLSCADPFTNE) the chain is on the extracellular side. The helical transmembrane segment at 197–219 (LVIFITGGLTGLICVLCLIISYT) threads the bilayer. Residues 220-236 (NVFSTILKIPSAQGKRK) are Cytoplasmic-facing. A helical membrane pass occupies residues 237–259 (AFSTCSSHLSVVSLFXGTSFCVY). The Extracellular segment spans residues 260–272 (FSPPSTRXAQKDT). A helical membrane pass occupies residues 273-292 (VASVMYTVVTPMLNPFIYSL). At 293–313 (RNQEIKSSLRKLIWVRKIHSP) the chain is on the cytoplasmic side.

This sequence belongs to the G-protein coupled receptor 1 family.

The protein localises to the cell membrane. Functionally, odorant receptor. The chain is Olfactory receptor 1G1 (OR1G1) from Pan troglodytes (Chimpanzee).